Here is an 844-residue protein sequence, read N- to C-terminus: MFDTLFKSIFGSSNDRYIKRCRTRVEAINALEPQMQALADEDFPARIAEYREQAQNGRSLDDLLPEVFALTREAGKRALNMRHFDVQLVGGMVLHEGRIAEMKTGEGKTLVATLPVVLNAISGLGVHVVTVNDYLAKRDAAWMGRLYNFLGLSVGVIVHGLSDEERKEAYGADITYGTNNEFGFDYLRDNMKFYPHQLVQREHNFAIVDEVDSILIDEARTPLIISGPSEDSTGLYRRVDDIIPKLSPEAHFSVDEKARTATLTDEGVAKCEELLGIDNLFDPGNITFQHHVLQALKAHHVFRRDVDYIVTPEDQVVIVDEFTGRLMPGRRFSDGLHQALEAKEKVKVEAENQTLASITFQNYFRMYKKLAGMTGTADTEAVEFQQIYGLQVITIPTNKPMVRKDYPDSIYRTRREKFEAIVAAIGELHKSGQPVLVGTISIETSELLSAMLKKTGVPHNVLNAKHHEQEAEIVAQAGQRGKVTIATNMAGRGTDIVLGEGVRESGGLHILGTERHESRRIDNQLRGRSGRQGDPGSSRFYLSLEDDLMRLFGSDRISGLMQKLGMEEGEPIENRMVSRAIENAQKRVEGHNFEIRKTLLDYDNVMNQQREVIYTLRRETMMEADLEETAVEFMDDLFDEIYGDAEQGKGSEGDDAKAYAMARLRDVFNITRVLPLTDGQLPDRETARGAVLSILDELKRDTGEVYRDILRFFLLEEVDRCWKEHLLNMDHLRDGIGLRGYGQRDPKQEYKREGFSLFQEMLFRVRENLFRALTRLRIQREEQAPPEELKQEFKHKEEPKSLNYSGAQKETPSAAPERRGEPKVGRNDPCPCGSGQKYKKCCGA.

Residues glutamine 87, glycine 105–threonine 109, and aspartate 495 contribute to the ATP site. The segment covering glutamine 783 to lysine 800 has biased composition (basic and acidic residues). Residues glutamine 783–alanine 844 are disordered. The segment covering leucine 802–threonine 811 has biased composition (polar residues). Positions proline 816–arginine 826 are enriched in basic and acidic residues. Residues cysteine 830, cysteine 832, cysteine 841, and cysteine 842 each contribute to the Zn(2+) site.

Belongs to the SecA family. In terms of assembly, monomer and homodimer. Part of the essential Sec protein translocation apparatus which comprises SecA, SecYEG and auxiliary proteins SecDF-YajC and YidC. The cofactor is Zn(2+).

Its subcellular location is the cell inner membrane. It localises to the cytoplasm. The enzyme catalyses ATP + H2O + cellular proteinSide 1 = ADP + phosphate + cellular proteinSide 2.. Part of the Sec protein translocase complex. Interacts with the SecYEG preprotein conducting channel. Has a central role in coupling the hydrolysis of ATP to the transfer of proteins into and across the cell membrane, serving as an ATP-driven molecular motor driving the stepwise translocation of polypeptide chains across the membrane. In Nitratidesulfovibrio vulgaris (strain DSM 19637 / Miyazaki F) (Desulfovibrio vulgaris), this protein is Protein translocase subunit SecA.